The chain runs to 205 residues: Holliday junction branch migration complex subunit RuvA (205 aa).

The domain I stretch occupies residues M1–I64. Residues T65–E143 form a domain II region. A flexible linker region spans residues R144 to P156. The interval T157–L205 is domain III.

The protein belongs to the RuvA family. Homotetramer. Forms an RuvA(8)-RuvB(12)-Holliday junction (HJ) complex. HJ DNA is sandwiched between 2 RuvA tetramers; dsDNA enters through RuvA and exits via RuvB. An RuvB hexamer assembles on each DNA strand where it exits the tetramer. Each RuvB hexamer is contacted by two RuvA subunits (via domain III) on 2 adjacent RuvB subunits; this complex drives branch migration. In the full resolvosome a probable DNA-RuvA(4)-RuvB(12)-RuvC(2) complex forms which resolves the HJ.

Its subcellular location is the cytoplasm. Functionally, the RuvA-RuvB-RuvC complex processes Holliday junction (HJ) DNA during genetic recombination and DNA repair, while the RuvA-RuvB complex plays an important role in the rescue of blocked DNA replication forks via replication fork reversal (RFR). RuvA specifically binds to HJ cruciform DNA, conferring on it an open structure. The RuvB hexamer acts as an ATP-dependent pump, pulling dsDNA into and through the RuvAB complex. HJ branch migration allows RuvC to scan DNA until it finds its consensus sequence, where it cleaves and resolves the cruciform DNA. This chain is Holliday junction branch migration complex subunit RuvA, found in Shewanella sp. (strain MR-4).